We begin with the raw amino-acid sequence, 274 residues long: Thymidylate synthase (274 aa).

R21 contributes to the dUMP binding site. H51 contributes to the (6R)-5,10-methylene-5,6,7,8-tetrahydrofolate binding site. R123 to R124 contacts dUMP. C156 functions as the Nucleophile in the catalytic mechanism. DUMP contacts are provided by residues R176–D179, N187, and H217–Y219. (6R)-5,10-methylene-5,6,7,8-tetrahydrofolate is bound at residue D179. A273 serves as a coordination point for (6R)-5,10-methylene-5,6,7,8-tetrahydrofolate.

This sequence belongs to the thymidylate synthase family. Bacterial-type ThyA subfamily. In terms of assembly, homodimer.

The protein resides in the cytoplasm. The enzyme catalyses dUMP + (6R)-5,10-methylene-5,6,7,8-tetrahydrofolate = 7,8-dihydrofolate + dTMP. Its pathway is pyrimidine metabolism; dTTP biosynthesis. Functionally, catalyzes the reductive methylation of 2'-deoxyuridine-5'-monophosphate (dUMP) to 2'-deoxythymidine-5'-monophosphate (dTMP) while utilizing 5,10-methylenetetrahydrofolate (mTHF) as the methyl donor and reductant in the reaction, yielding dihydrofolate (DHF) as a by-product. This enzymatic reaction provides an intracellular de novo source of dTMP, an essential precursor for DNA biosynthesis. This Flavobacterium psychrophilum (strain ATCC 49511 / DSM 21280 / CIP 103535 / JIP02/86) protein is Thymidylate synthase.